Here is a 448-residue protein sequence, read N- to C-terminus: Ribosomal protein uS12 methylthiotransferase RimO (448 aa).

The 111-residue stretch at 10-120 (PNIGFVSLGC…VMEHVHKYVP (111 aa)) folds into the MTTase N-terminal domain. C19, C55, C84, C152, C156, and C159 together coordinate [4Fe-4S] cluster. Residues 138–379 (LTPKHYAYLK…MELQQQISAQ (242 aa)) form the Radical SAM core domain. One can recognise a TRAM domain in the interval 382–448 (QQKIGKTLPV…ADEYDLWGTC (67 aa)).

It belongs to the methylthiotransferase family. RimO subfamily. Requires [4Fe-4S] cluster as cofactor.

The protein resides in the cytoplasm. The catalysed reaction is L-aspartate(89)-[ribosomal protein uS12]-hydrogen + (sulfur carrier)-SH + AH2 + 2 S-adenosyl-L-methionine = 3-methylsulfanyl-L-aspartate(89)-[ribosomal protein uS12]-hydrogen + (sulfur carrier)-H + 5'-deoxyadenosine + L-methionine + A + S-adenosyl-L-homocysteine + 2 H(+). Catalyzes the methylthiolation of an aspartic acid residue of ribosomal protein uS12. This is Ribosomal protein uS12 methylthiotransferase RimO from Mannheimia succiniciproducens (strain KCTC 0769BP / MBEL55E).